A 245-amino-acid chain; its full sequence is Carboxy-S-adenosyl-L-methionine synthase (245 aa).

S-adenosyl-L-methionine-binding positions include Y42, 67-69 (GCS), 92-93 (DN), 120-121 (DI), N135, and R202.

Belongs to the class I-like SAM-binding methyltransferase superfamily. Cx-SAM synthase family. In terms of assembly, homodimer.

It catalyses the reaction prephenate + S-adenosyl-L-methionine = carboxy-S-adenosyl-L-methionine + 3-phenylpyruvate + H2O. Its function is as follows. Catalyzes the conversion of S-adenosyl-L-methionine (SAM) to carboxy-S-adenosyl-L-methionine (Cx-SAM). The sequence is that of Carboxy-S-adenosyl-L-methionine synthase from Vibrio vulnificus (strain CMCP6).